Reading from the N-terminus, the 210-residue chain is High frequency lysogenization protein HflD homolog (210 aa).

A coiled-coil region spans residues 103–130; it reads EAKAKLAERLQQIERQLPLYENDIMADQ.

This sequence belongs to the HflD family.

It is found in the cytoplasm. It localises to the cell inner membrane. The chain is High frequency lysogenization protein HflD homolog from Actinobacillus pleuropneumoniae serotype 3 (strain JL03).